We begin with the raw amino-acid sequence, 477 residues long: Exodeoxyribonuclease 7 large subunit (477 aa).

Residues 456 to 477 are disordered; sequence GGTVAPRKAPPKKPGGGQGSLL.

The protein belongs to the XseA family. In terms of assembly, heterooligomer composed of large and small subunits.

It is found in the cytoplasm. It catalyses the reaction Exonucleolytic cleavage in either 5'- to 3'- or 3'- to 5'-direction to yield nucleoside 5'-phosphates.. Its function is as follows. Bidirectionally degrades single-stranded DNA into large acid-insoluble oligonucleotides, which are then degraded further into small acid-soluble oligonucleotides. This is Exodeoxyribonuclease 7 large subunit from Parvibaculum lavamentivorans (strain DS-1 / DSM 13023 / NCIMB 13966).